Reading from the N-terminus, the 233-residue chain is Phycoerythrobilin synthase (233 aa).

The protein belongs to the HY2 family.

It carries out the reaction (3Z)-phycoerythrobilin + 2 oxidized 2[4Fe-4S]-[ferredoxin] = biliverdin IXalpha + 2 reduced 2[4Fe-4S]-[ferredoxin] + 4 H(+). Plays a role in phycoerythrobilin biosynthesis, the red pigment chromophore photosynthetically active biliproteins of the host cyanobacteria. Uses a four-electron reduction to carry out the reactions catalyzed by two enzymes (EC 1.3.7.2 and EC 1.3.7.3) in host. This Prochlorococcus protein is Phycoerythrobilin synthase (pebS).